A 487-amino-acid polypeptide reads, in one-letter code: uncharacterized protein (487 aa).

ABC transporter domains follow at residues 5–249 (VKFA…IPVK) and 265–487 (ISME…VIHA). 297-304 (GSNGSGKT) lines the ATP pocket.

This sequence belongs to the ABC transporter superfamily.

The protein localises to the mitochondrion. This is an uncharacterized protein from Schizosaccharomyces pombe (strain 972 / ATCC 24843) (Fission yeast).